We begin with the raw amino-acid sequence, 657 residues long: Oleate activated transcription factor 3 (657 aa).

The segment at residues 21–48 is a DNA-binding region (zn(2)-C6 fungal-type); it reads CLNCRRRKTKCDRGKPSCSNCLKLGETC.

It belongs to the OAF3 family.

The protein localises to the cytoplasm. Its subcellular location is the nucleus. It localises to the mitochondrion. Transcriptional inhibitor with a significantly increased number of target genes in response to oleate. This chain is Oleate activated transcription factor 3 (OAF3), found in Kluyveromyces lactis (strain ATCC 8585 / CBS 2359 / DSM 70799 / NBRC 1267 / NRRL Y-1140 / WM37) (Yeast).